Reading from the N-terminus, the 207-residue chain is Small ribosomal subunit protein uS4 (207 aa).

The tract at residues Lys-33 to Asn-54 is disordered. Residues Gly-42–Gly-53 are compositionally biased toward polar residues. In terms of domain architecture, S4 RNA-binding spans Ser-97–Ala-157.

It belongs to the universal ribosomal protein uS4 family. Part of the 30S ribosomal subunit. Contacts protein S5. The interaction surface between S4 and S5 is involved in control of translational fidelity.

In terms of biological role, one of the primary rRNA binding proteins, it binds directly to 16S rRNA where it nucleates assembly of the body of the 30S subunit. With S5 and S12 plays an important role in translational accuracy. This is Small ribosomal subunit protein uS4 from Ralstonia pickettii (strain 12J).